Here is a 387-residue protein sequence, read N- to C-terminus: Zinc finger protein neuro-d4 (387 aa).

Glycyl lysine isopeptide (Lys-Gly) (interchain with G-Cter in SUMO2) cross-links involve residues Lys106, Lys129, and Lys133. The C2H2-type zinc finger occupies Tyr195–His218. PHD-type zinc fingers lie at residues Asn271–Cys328 and Cys325–His375. Residues Cys274, Cys277, Cys293, Cys296, His301, Cys304, Cys322, Cys325, Cys328, Cys331, Cys343, Cys346, His351, Cys354, Cys369, and Cys372 each contribute to the Zn(2+) site.

It belongs to the requiem/DPF family. In terms of assembly, component of neuron-specific chromatin remodeling complex (nBAF complex) composed of at least, ARID1A/BAF250A or ARID1B/BAF250B, SMARCD1/BAF60A, SMARCD3/BAF60C, SMARCA2/BRM/BAF190B, SMARCA4/BRG1/BAF190A, SMARCB1/BAF47, SMARCC1/BAF155, SMARCE1/BAF57, SMARCC2/BAF170, DPF1/BAF45B, DPF3/BAF45C, ACTL6B/BAF53B and actin. In terms of tissue distribution, at embryonic stages, predominant expression in the nervous system. Expressed specifically in postmitotic neurons (at protein level).

It localises to the cytoplasm. The protein localises to the nucleus. In terms of biological role, may have an important role in developing neurons by participating in regulation of cell survival, possibly as a neurospecific transcription factor. Belongs to the neuron-specific chromatin remodeling complex (nBAF complex). During neural development a switch from a stem/progenitor to a postmitotic chromatin remodeling mechanism occurs as neurons exit the cell cycle and become committed to their adult state. The transition from proliferating neural stem/progenitor cells to postmitotic neurons requires a switch in subunit composition of the npBAF and nBAF complexes. As neural progenitors exit mitosis and differentiate into neurons, npBAF complexes which contain ACTL6A/BAF53A and PHF10/BAF45A, are exchanged for homologous alternative ACTL6B/BAF53B and DPF1/BAF45B or DPF3/BAF45C subunits in neuron-specific complexes (nBAF). The npBAF complex is essential for the self-renewal/proliferative capacity of the multipotent neural stem cells. The nBAF complex along with CREST plays a role regulating the activity of genes essential for dendrite growth. This chain is Zinc finger protein neuro-d4, found in Mus musculus (Mouse).